Here is a 541-residue protein sequence, read N- to C-terminus: Chaperonin GroEL 2 (541 aa).

ATP-binding positions include 29 to 32 (TLGP), 86 to 90 (DGTTT), Gly413, and Asp492.

Belongs to the chaperonin (HSP60) family. As to quaternary structure, forms a cylinder of 14 subunits composed of two heptameric rings stacked back-to-back. Interacts with the co-chaperonin GroES.

The protein resides in the cytoplasm. It catalyses the reaction ATP + H2O + a folded polypeptide = ADP + phosphate + an unfolded polypeptide.. Functionally, together with its co-chaperonin GroES, plays an essential role in assisting protein folding. The GroEL-GroES system forms a nano-cage that allows encapsulation of the non-native substrate proteins and provides a physical environment optimized to promote and accelerate protein folding. This is Chaperonin GroEL 2 from Nocardia farcinica (strain IFM 10152).